Here is a 241-residue protein sequence, read N- to C-terminus: Polyol phosphate phosphatase PYP1 (241 aa).

The Nucleophile role is filled by aspartate 9. Mg(2+) contacts are provided by aspartate 9, aspartate 11, and aspartate 179. Residue aspartate 11 is the Proton donor of the active site.

It belongs to the HAD-like hydrolase superfamily. Mg(2+) is required as a cofactor.

Its subcellular location is the cytoplasm. It localises to the nucleus. It catalyses the reaction D-ribitol 5-phosphate + H2O = ribitol + phosphate. The enzyme catalyses D-sorbitol 6-phosphate + H2O = D-sorbitol + phosphate. It carries out the reaction sn-glycerol 1-phosphate + H2O = glycerol + phosphate. The catalysed reaction is D-erythrose 4-phosphate + H2O = D-erythrose + phosphate. Hydrolyzes sugar alcohol (polyol) phosphates. Dephosphorylates a variety of substrates, including: sn-glycerol 1-phosphate (D-glycerol 3-phosphate), D-ribitol 5-phosphate, D-sorbitol 6-phosphate (D-glucitol 6-phosphate), and D-erythrose 4-phosphate. Prevents accumulation of toxic levels of polyol phosphates, which can impair glycolysis by inhibiting glucose-6-phosphate isomerase. The chain is Polyol phosphate phosphatase PYP1 from Saccharomyces cerevisiae (strain ATCC 204508 / S288c) (Baker's yeast).